Consider the following 543-residue polypeptide: Cobyric acid synthase (543 aa).

Residues 260-483 form the GATase cobBQ-type domain; the sequence is MLDIVLVDLP…LHGVFDADGF (224 aa). Cysteine 346 serves as the catalytic Nucleophile. Histidine 475 is an active-site residue.

This sequence belongs to the CobB/CobQ family. CobQ subfamily.

It participates in cofactor biosynthesis; adenosylcobalamin biosynthesis. Catalyzes amidations at positions B, D, E, and G on adenosylcobyrinic A,C-diamide. NH(2) groups are provided by glutamine, and one molecule of ATP is hydrogenolyzed for each amidation. This is Cobyric acid synthase from Nitratidesulfovibrio vulgaris (strain ATCC 29579 / DSM 644 / CCUG 34227 / NCIMB 8303 / VKM B-1760 / Hildenborough) (Desulfovibrio vulgaris).